Reading from the N-terminus, the 160-residue chain is SUMO-conjugating enzyme SCE1 (160 aa).

Alanine 2 carries the post-translational modification N-acetylalanine. The 154-residue stretch at 5–158 folds into the UBC core domain; that stretch reads IARGRLAEER…VKLQSKQYPA (154 aa). The active-site Glycyl thioester intermediate is the cysteine 94.

Belongs to the ubiquitin-conjugating enzyme family. In terms of assembly, interacts with SIZ1 (via PHD domain) and MMS21. Interacts with TCP14 and TCP15. Interacts with KIN10.

It participates in protein modification; protein sumoylation. SUMO-conjugating enzyme that accepts the SUMO proteins from the E1 SUMO-activating heterodimer SAE1/SAE2 and catalyzes its covalent attachment to other proteins with the E3 SUMO ligases SIZ1 and MMS21. Associates with SIZ1 for sumoylation of the transcription factor GTE3. This Arabidopsis thaliana (Mouse-ear cress) protein is SUMO-conjugating enzyme SCE1 (SCE1).